The primary structure comprises 524 residues: RNA-splicing ligase RtcB homolog 1 (524 aa).

Residues D141, C144, H249, H281, and H372 each coordinate Mn(2+). 248-252 (NHYLE) serves as a coordination point for GMP. GMP is bound by residues 372-373 (HN), 421-424 (GGSM), S428, 447-450 (HGAG), and K523. H447 functions as the GMP-histidine intermediate in the catalytic mechanism.

Belongs to the RtcB family. As to quaternary structure, catalytic component of the tRNA-splicing ligase complex. The cofactor is Mn(2+).

It carries out the reaction a 3'-end 3'-phospho-ribonucleotide-RNA + a 5'-end dephospho-ribonucleoside-RNA + GTP = a ribonucleotidyl-ribonucleotide-RNA + GMP + diphosphate. It catalyses the reaction a 3'-end 2',3'-cyclophospho-ribonucleotide-RNA + a 5'-end dephospho-ribonucleoside-RNA + GTP + H2O = a ribonucleotidyl-ribonucleotide-RNA + GMP + diphosphate + H(+). Catalytic subunit of the tRNA-splicing ligase complex that acts by directly joining spliced tRNA halves to mature-sized tRNAs by incorporating the precursor-derived splice junction phosphate into the mature tRNA as a canonical 3',5'-phosphodiester. May act as an RNA ligase with broad substrate specificity, and may function toward other RNAs. The polypeptide is RNA-splicing ligase RtcB homolog 1 (Entamoeba histolytica (strain ATCC 30459 / HM-1:IMSS / ABRM)).